Reading from the N-terminus, the 511-residue chain is MAPKKKGQKMALHEFFEEAATSGTSWADDDFDLPTAPAAREESGSGLKRGDPGYFESLPDRGSRQATFAGAPVQREELPLPTVPPFTAFIGNLSFEPDVEDEVRAFFNDLDPVSVRIVKDPQGKPKGFGYAEFKTQDGLKQALDRSMSQLQGRTIRVNVAEAPSTSRHPPSAAEEASQWRRSTPLASRESSSQPSRRTGGPSEPAADLDWSVARGAKFTPSAPAAPLSGVRRDSSGPGHTREPRDPGVSDTADQWRSNKPLAEKVDRDVPPHQAGVAPPIVSPSLADTEQTWSRGTKLRTPTTTSRQSSADSTPSSGAPQERRKLNLKPRTAGSPSATANATPAAPASGIFGAAKPIDSAAREKAAEEKLAQREGERRKAREEAEKQKAAAGDKPVEGEKLGWREEKLRSIKAAQDKVAGKPTTAPATTTNTGAGRKGSADRAKKDEQGFEQVQPSRKSSQTGATSENKPKKDYSTRPQFSFAAAAGAIRNDLVEDKDEEEVTKGVEEVKI.

2 disordered regions span residues 25-63 (SWAD…DRGS) and 154-511 (TIRV…EVKI). Basic and acidic residues predominate over residues 39–51 (AREESGSGLKRGD). The RRM domain maps to 86–162 (FTAFIGNLSF…RTIRVNVAEA (77 aa)). The span at 179-196 (WRRSTPLASRESSSQPSR) shows a compositional bias: polar residues. 2 stretches are compositionally biased toward basic and acidic residues: residues 230-247 (VRRD…RDPG) and 261-270 (LAEKVDRDVP). Over residues 285–318 (LADTEQTWSRGTKLRTPTTTSRQSSADSTPSSGA) the composition is skewed to polar residues. A compositionally biased stretch (low complexity) spans 331–349 (TAGSPSATANATPAAPASG). Serine 334 carries the phosphoserine modification. Basic and acidic residues-rich tracts occupy residues 360–388 (AARE…EKQK) and 394–419 (KPVE…DKVA). The span at 420–434 (GKPTTAPATTTNTGA) shows a compositional bias: low complexity. A compositionally biased stretch (basic and acidic residues) spans 438-448 (GSADRAKKDEQ). Polar residues predominate over residues 451–467 (EQVQPSRKSSQTGATSE). The span at 502 to 511 (VTKGVEEVKI) shows a compositional bias: basic and acidic residues.

It localises to the cytoplasm. It is found in the P-body. Functionally, probable translation initiation factor. The chain is Probable eukaryotic translation initiation factor 4H from Cryptococcus neoformans var. grubii serotype A (strain H99 / ATCC 208821 / CBS 10515 / FGSC 9487) (Filobasidiella neoformans var. grubii).